A 316-amino-acid polypeptide reads, in one-letter code: Type II restriction enzyme BsuBI (316 aa).

The protein belongs to the BsuBI/PstI type II restriction endonuclease family. Homodimer. The cofactor is Mg(2+).

It catalyses the reaction Endonucleolytic cleavage of DNA to give specific double-stranded fragments with terminal 5'-phosphates.. Functionally, a P subtype restriction enzyme that recognizes the double-stranded sequence 5'-CTGCAG-3' and cleaves after A-5. This Bacillus subtilis protein is Type II restriction enzyme BsuBI (hsdBR).